Consider the following 502-residue polypeptide: Cytochrome P450 3A5 (502 aa).

C441 provides a ligand contact to heme.

It belongs to the cytochrome P450 family. Requires heme as cofactor.

Its subcellular location is the endoplasmic reticulum membrane. The protein resides in the microsome membrane. The catalysed reaction is an organic molecule + reduced [NADPH--hemoprotein reductase] + O2 = an alcohol + oxidized [NADPH--hemoprotein reductase] + H2O + H(+). It carries out the reaction 17beta-estradiol + reduced [NADPH--hemoprotein reductase] + O2 = 2-hydroxy-17beta-estradiol + oxidized [NADPH--hemoprotein reductase] + H2O + H(+). It catalyses the reaction 17beta-estradiol + reduced [NADPH--hemoprotein reductase] + O2 = 4-hydroxy-17beta-estradiol + oxidized [NADPH--hemoprotein reductase] + H2O + H(+). The enzyme catalyses estrone + reduced [NADPH--hemoprotein reductase] + O2 = 2-hydroxyestrone + oxidized [NADPH--hemoprotein reductase] + H2O + H(+). The catalysed reaction is estrone + reduced [NADPH--hemoprotein reductase] + O2 = 4-hydroxyestrone + oxidized [NADPH--hemoprotein reductase] + H2O + H(+). It carries out the reaction testosterone + reduced [NADPH--hemoprotein reductase] + O2 = 6beta,17beta-dihydroxyandrost-4-en-3-one + oxidized [NADPH--hemoprotein reductase] + H2O + H(+). It catalyses the reaction androst-4-ene-3,17-dione + reduced [NADPH--hemoprotein reductase] + O2 = 6beta-hydroxyandrost-4-ene-3,17-dione + oxidized [NADPH--hemoprotein reductase] + H2O + H(+). The enzyme catalyses progesterone + reduced [NADPH--hemoprotein reductase] + O2 = 6beta-hydroxyprogesterone + oxidized [NADPH--hemoprotein reductase] + H2O + H(+). The catalysed reaction is all-trans-retinol + reduced [NADPH--hemoprotein reductase] + O2 = all-trans-retinal + oxidized [NADPH--hemoprotein reductase] + 2 H2O + H(+). It carries out the reaction all-trans-retinoate + reduced [NADPH--hemoprotein reductase] + O2 = all-trans-4-hydroxyretinoate + oxidized [NADPH--hemoprotein reductase] + H2O + H(+). It functions in the pathway steroid hormone biosynthesis. The protein operates within cofactor metabolism; retinol metabolism. Functionally, a cytochrome P450 monooxygenase involved in the metabolism of steroid hormones and vitamins. Mechanistically, uses molecular oxygen inserting one oxygen atom into a substrate, and reducing the second into a water molecule, with two electrons provided by NADPH via cytochrome P450 reductase (NADPH--hemoprotein reductase). Catalyzes the hydroxylation of carbon-hydrogen bonds. Exhibits high catalytic activity for the formation of catechol estrogens from 17beta-estradiol (E2) and estrone (E1), namely 2-hydroxy E1 and E2. Catalyzes 6beta-hydroxylation of the steroid hormones testosterone, progesterone, and androstenedione. Catalyzes the oxidative conversion of all-trans-retinol to all-trans-retinal, a rate-limiting step for the biosynthesis of all-trans-retinoic acid (atRA). Further metabolizes all trans-retinoic acid (atRA) to 4-hydroxyretinoate and may play a role in hepatic atRA clearance. Also involved in the oxidative metabolism of xenobiotics, including calcium channel blocking drug nifedipine and immunosuppressive drug cyclosporine. The chain is Cytochrome P450 3A5 from Homo sapiens (Human).